A 793-amino-acid polypeptide reads, in one-letter code: Kinesin-like protein KIF3C (793 aa).

Positions 10–365 (ALKVVARCRP…LRFANRAKNI (356 aa)) constitute a Kinesin motor domain. 97 to 104 (GQTGTGKT) serves as a coordination point for ATP. 3 disordered regions span residues 251-288 (ERQNKAGPNTAGGASTPSSGGSGGGGGSGGGAGGERPK), 395-423 (EKRGMLGKRPRRKSSRGKKAVSAPPGYPE), and 756-793 (KVRKSRSWCQSPQRPPPSTTHASLASASLRPATVADHE). A compositionally biased stretch (gly residues) spans 270–284 (GGSGGGGGSGGGAGG). Residues 376–630 (KDTLLREFQE…QNEQTRELKL (255 aa)) adopt a coiled-coil conformation. Over residues 399 to 413 (MLGKRPRRKSSRGKK) the composition is skewed to basic residues. Residues 631–793 (KYLIIENFIP…LRPATVADHE (163 aa)) form a globular region.

It belongs to the TRAFAC class myosin-kinesin ATPase superfamily. Kinesin family. Kinesin II subfamily. As to quaternary structure, heterodimer of KIF3A and KIF3C.

It is found in the cytoplasm. It localises to the cytoskeleton. In terms of biological role, microtubule-based anterograde translocator for membranous organelles. In Pongo abelii (Sumatran orangutan), this protein is Kinesin-like protein KIF3C (KIF3C).